A 185-amino-acid polypeptide reads, in one-letter code: Ribose 1,5-bisphosphate phosphokinase PhnN (185 aa).

10-17 (GPSGSGKD) is an ATP binding site.

It belongs to the ribose 1,5-bisphosphokinase family.

It carries out the reaction alpha-D-ribose 1,5-bisphosphate + ATP = 5-phospho-alpha-D-ribose 1-diphosphate + ADP. It participates in metabolic intermediate biosynthesis; 5-phospho-alpha-D-ribose 1-diphosphate biosynthesis; 5-phospho-alpha-D-ribose 1-diphosphate from D-ribose 5-phosphate (route II): step 3/3. Functionally, catalyzes the phosphorylation of ribose 1,5-bisphosphate to 5-phospho-D-ribosyl alpha-1-diphosphate (PRPP). This Pseudomonas paraeruginosa (strain DSM 24068 / PA7) (Pseudomonas aeruginosa (strain PA7)) protein is Ribose 1,5-bisphosphate phosphokinase PhnN.